A 366-amino-acid polypeptide reads, in one-letter code: Lipase member J (366 aa).

Ser-141 (nucleophile) is an active-site residue. Residues Asp-312 and His-341 each act as charge relay system in the active site.

It belongs to the AB hydrolase superfamily. Lipase family.

In Homo sapiens (Human), this protein is Lipase member J (LIPJ).